Consider the following 234-residue polypeptide: Ribose-5-phosphate isomerase A (234 aa).

Substrate-binding positions include 28–31 (TGST), 85–88 (DGAD), and 98–101 (KGLG). The active-site Proton acceptor is Glu107. Residue Lys125 coordinates substrate.

The protein belongs to the ribose 5-phosphate isomerase family. As to quaternary structure, homodimer.

It catalyses the reaction aldehydo-D-ribose 5-phosphate = D-ribulose 5-phosphate. It participates in carbohydrate degradation; pentose phosphate pathway; D-ribose 5-phosphate from D-ribulose 5-phosphate (non-oxidative stage): step 1/1. Its function is as follows. Catalyzes the reversible conversion of ribose-5-phosphate to ribulose 5-phosphate. This is Ribose-5-phosphate isomerase A from Roseiflexus castenholzii (strain DSM 13941 / HLO8).